The primary structure comprises 628 residues: DNA-directed RNA polymerase III subunit RPC3 (628 aa).

Acidic residues predominate over residues 360–383 (EVDGEASADEDEGEDESSEESDYD). Residues 360-422 (EVDGEASADE…SAAPKERRMD (63 aa)) form a disordered region. Residues 390–406 (TTHGTNGVNGTNGTNGT) are compositionally biased toward low complexity. Positions 408 to 422 (VKFDESAAPKERRMD) are enriched in basic and acidic residues. The segment at 555-576 (GYVTMVHCLQVLEALRRKERDV) is leucine-zipper.

It belongs to the RNA polymerase beta chain family. In terms of assembly, component of the RNA polymerase III (Pol III) complex consisting of 17 subunits.

The protein resides in the nucleus. DNA-dependent RNA polymerase catalyzes the transcription of DNA into RNA using the four ribonucleoside triphosphates as substrates. Specific core component of RNA polymerase III which synthesizes small RNAs, such as 5S rRNA and tRNAs. The protein is DNA-directed RNA polymerase III subunit RPC3 (RPC82) of Chaetomium globosum (strain ATCC 6205 / CBS 148.51 / DSM 1962 / NBRC 6347 / NRRL 1970) (Soil fungus).